Consider the following 109-residue polypeptide: MLEPFQILSICSFILSALHFMAWTIGHLNQIKRGVNLKIRIRNPNKETINREVSILRHSYQKEIQAKETMKEVLSDNMEILSDHIVIEGLSAEEIIKMGETVLEVEELQ.

Over 1 to 4 (MLEP) the chain is Virion surface. A helical; Signal-anchor for type III membrane protein transmembrane segment spans residues 5–27 (FQILSICSFILSALHFMAWTIGH). The Intravirion segment spans residues 28–109 (LNQIKRGVNL…ETVLEVEELQ (82 aa)). Positions 58 to 83 (HSYQKEIQAKETMKEVLSDNMEILSD) form a coiled coil.

In terms of assembly, homotetramer. In terms of processing, phosphorylated by host.

The protein resides in the virion membrane. Its subcellular location is the host cell membrane. In terms of biological role, forms presumably a highly low-pH gated proton-selective channel. Trp-23 may function as a minimalistic gate that opens and closes the pore. When the environmental pH is lower than a threshold, the BM2 channel would be activated and selectively transport protons across the membrane from the extracellular side to the cytoplasmic side. Crucial for the uncoating process. When the virion is internalized into the endosome, the channel acidifies the virion's interior, promoting the dissociation of matrix protein 1 (M1) from the ribonucleoprotein (RNP) thus allowing the transport of the RNP from the virion into the cell's nucleus. Also plays a role in viral protein secretory pathway. Elevates the intravesicular pH of normally acidic compartments, such as trans-Golgi network, preventing newly formed hemagglutinin from premature switching to the fusion-active conformation. Plays a crucial role in virion assembly. Expressed in the late phase of the infection. This is Matrix protein 2 (M) from Influenza B virus (strain B/Ann Arbor/1/1966 [cold-adapted]).